The following is a 38-amino-acid chain: Photosystem II reaction center protein L (38 aa).

A helical membrane pass occupies residues 17-37; it reads SLYFGLLLIFVLAVLFSSYIF.

It belongs to the PsbL family. PSII is composed of 1 copy each of membrane proteins PsbA, PsbB, PsbC, PsbD, PsbE, PsbF, PsbH, PsbI, PsbJ, PsbK, PsbL, PsbM, PsbT, PsbX, PsbY, PsbZ, Psb30/Ycf12, at least 3 peripheral proteins of the oxygen-evolving complex and a large number of cofactors. It forms dimeric complexes.

It is found in the plastid. The protein resides in the chloroplast thylakoid membrane. In terms of biological role, one of the components of the core complex of photosystem II (PSII). PSII is a light-driven water:plastoquinone oxidoreductase that uses light energy to abstract electrons from H(2)O, generating O(2) and a proton gradient subsequently used for ATP formation. It consists of a core antenna complex that captures photons, and an electron transfer chain that converts photonic excitation into a charge separation. This subunit is found at the monomer-monomer interface and is required for correct PSII assembly and/or dimerization. This chain is Photosystem II reaction center protein L, found in Chlamydomonas moewusii (Chlamydomonas eugametos).